Here is a 624-residue protein sequence, read N- to C-terminus: tRNA uridine 5-carboxymethylaminomethyl modification enzyme MnmG (624 aa).

Residues 16-21, V128, and S183 contribute to the FAD site; that span reads GAGHAG. 275–289 provides a ligand contact to NAD(+); that stretch reads GPRYCPSIEDKVVRF. Q372 is an FAD binding site.

Belongs to the MnmG family. As to quaternary structure, homodimer. Heterotetramer of two MnmE and two MnmG subunits. FAD is required as a cofactor.

The protein resides in the cytoplasm. In terms of biological role, NAD-binding protein involved in the addition of a carboxymethylaminomethyl (cmnm) group at the wobble position (U34) of certain tRNAs, forming tRNA-cmnm(5)s(2)U34. The chain is tRNA uridine 5-carboxymethylaminomethyl modification enzyme MnmG from Geobacter metallireducens (strain ATCC 53774 / DSM 7210 / GS-15).